A 360-amino-acid polypeptide reads, in one-letter code: Phospho-N-acetylmuramoyl-pentapeptide-transferase (360 aa).

The next 10 membrane-spanning stretches (helical) occupy residues 18–38 (VFSY…VFSL), 73–93 (TMGG…WGDL), 97–117 (YVLV…IDDY), 134–154 (YILQ…SSTL), 168–188 (VMPQ…VGAS), 199–219 (GLAI…AYLS), 236–256 (AGEL…FLWF), 263–283 (VFMG…IAVL), 288–308 (ILLV…ILQV), and 338–358 (VIVR…ATLK).

This sequence belongs to the glycosyltransferase 4 family. MraY subfamily. The cofactor is Mg(2+).

It localises to the cell inner membrane. It carries out the reaction UDP-N-acetyl-alpha-D-muramoyl-L-alanyl-gamma-D-glutamyl-meso-2,6-diaminopimeloyl-D-alanyl-D-alanine + di-trans,octa-cis-undecaprenyl phosphate = di-trans,octa-cis-undecaprenyl diphospho-N-acetyl-alpha-D-muramoyl-L-alanyl-D-glutamyl-meso-2,6-diaminopimeloyl-D-alanyl-D-alanine + UMP. The protein operates within cell wall biogenesis; peptidoglycan biosynthesis. Its function is as follows. Catalyzes the initial step of the lipid cycle reactions in the biosynthesis of the cell wall peptidoglycan: transfers peptidoglycan precursor phospho-MurNAc-pentapeptide from UDP-MurNAc-pentapeptide onto the lipid carrier undecaprenyl phosphate, yielding undecaprenyl-pyrophosphoryl-MurNAc-pentapeptide, known as lipid I. In Shewanella denitrificans (strain OS217 / ATCC BAA-1090 / DSM 15013), this protein is Phospho-N-acetylmuramoyl-pentapeptide-transferase.